The following is a 265-amino-acid chain: tRNA (guanine-N(7)-)-methyltransferase (265 aa).

Residues Glu96, Glu121, Asp148, and Asp170 each contribute to the S-adenosyl-L-methionine site. Asp170 is an active-site residue. Substrate contacts are provided by Lys174 and Asp206.

This sequence belongs to the class I-like SAM-binding methyltransferase superfamily. TrmB family.

It carries out the reaction guanosine(46) in tRNA + S-adenosyl-L-methionine = N(7)-methylguanosine(46) in tRNA + S-adenosyl-L-homocysteine. Its pathway is tRNA modification; N(7)-methylguanine-tRNA biosynthesis. Functionally, catalyzes the formation of N(7)-methylguanine at position 46 (m7G46) in tRNA. The protein is tRNA (guanine-N(7)-)-methyltransferase of Rhodopseudomonas palustris (strain ATCC BAA-98 / CGA009).